Here is a 283-residue protein sequence, read N- to C-terminus: Putative F-box protein At1g60370 (283 aa).

The F-box domain occupies 4–53; the sequence is GEKLESIPIDLIIEIHSRLPAESVARFRCVSKLWGSMFRRPYFTELFLTR.

In Arabidopsis thaliana (Mouse-ear cress), this protein is Putative F-box protein At1g60370.